The chain runs to 522 residues: Gypsy retrotransposon integrase-like protein 1 (522 aa).

An Integrase catalytic domain is found at 135–292; sequence KVENPWSLVT…TPYFQMFSRN (158 aa).

The polypeptide is Gypsy retrotransposon integrase-like protein 1 (GIN1) (Macaca fascicularis (Crab-eating macaque)).